We begin with the raw amino-acid sequence, 518 residues long: 2-isopropylmalate synthase (518 aa).

In terms of domain architecture, Pyruvate carboxyltransferase spans 5 to 267 (VIIFDTTLRD…STKIKHKEIY (263 aa)). Aspartate 14, histidine 202, histidine 204, and asparagine 238 together coordinate Mn(2+). The tract at residues 392 to 518 (SLSFFSVQSI…KLKKLKKINN (127 aa)) is regulatory domain.

This sequence belongs to the alpha-IPM synthase/homocitrate synthase family. LeuA type 1 subfamily. In terms of assembly, homodimer. The cofactor is Mn(2+).

It localises to the cytoplasm. The enzyme catalyses 3-methyl-2-oxobutanoate + acetyl-CoA + H2O = (2S)-2-isopropylmalate + CoA + H(+). The protein operates within amino-acid biosynthesis; L-leucine biosynthesis; L-leucine from 3-methyl-2-oxobutanoate: step 1/4. In terms of biological role, catalyzes the condensation of the acetyl group of acetyl-CoA with 3-methyl-2-oxobutanoate (2-ketoisovalerate) to form 3-carboxy-3-hydroxy-4-methylpentanoate (2-isopropylmalate). The polypeptide is 2-isopropylmalate synthase (Buchnera aphidicola subsp. Rhopalosiphum padi).